Here is a 448-residue protein sequence, read N- to C-terminus: uncharacterized protein (448 aa).

One can recognise a uDENN domain in the interval 4–155; the sequence is QAIVLATFDA…SAVNLEFDSL (152 aa). Positions 183–326 constitute a cDENN domain; the sequence is LDHLGPAFYC…FKGLSRYLSF (144 aa). One can recognise a dDENN domain in the interval 328-428; sequence GESSWGLTTY…WQYGKYFWLR (101 aa). A helical membrane pass occupies residues 425–447; sequence FWLRRVSLIFLASTCFLFILWKL.

The protein resides in the golgi apparatus membrane. It localises to the endoplasmic reticulum membrane. This is an uncharacterized protein from Schizosaccharomyces pombe (strain 972 / ATCC 24843) (Fission yeast).